The sequence spans 782 residues: DnaJ homolog subfamily C member 16 (782 aa).

The signal sequence occupies residues 1–25 (MEVRKLSISWQFLIVLVLILQILSA). The Cytoplasmic portion of the chain corresponds to 26-535 (LDFDPYKVLG…DSIFHNNWRE (510 aa)). One can recognise a J domain in the interval 29 to 93 (DPYKVLGVSR…EKRSNYDQYG (65 aa)). The Thioredoxin domain maps to 119-247 (FYFDESFFHF…LRQFVESLLP (129 aa)). The helical; Anchor for type IV membrane protein transmembrane segment at 536-556 (MMPLLSLIFSALFILFGTVIV) threads the bilayer. The Extracellular segment spans residues 557–782 (QAFSDSSDER…FYIPSWPELD (226 aa)). A disordered region spans residues 562–593 (SSDERESSPPDKEEAQEKTGKTEPSFTKENSS). A compositionally biased stretch (basic and acidic residues) spans 563–582 (SDERESSPPDKEEAQEKTGK). A compositionally biased stretch (polar residues) spans 583–593 (TEPSFTKENSS). N-linked (GlcNAc...) asparagine glycosylation is present at Asn-631.

It localises to the endoplasmic reticulum membrane. In terms of biological role, plays an important role in regulating the size of autophagosomes during the formation process. The protein is DnaJ homolog subfamily C member 16 (DNAJC16) of Pongo abelii (Sumatran orangutan).